The chain runs to 200 residues: Thymidine kinase (200 aa).

ATP is bound by residues 15-22 (GSMFSGKS) and 88-91 (DEVQ). The active-site Proton acceptor is glutamate 89. Cysteine 145, cysteine 148, cysteine 183, and histidine 186 together coordinate Zn(2+).

It belongs to the thymidine kinase family. Homotetramer.

Its subcellular location is the cytoplasm. The catalysed reaction is thymidine + ATP = dTMP + ADP + H(+). In Bacillus pumilus (strain SAFR-032), this protein is Thymidine kinase.